Reading from the N-terminus, the 408-residue chain is Peptidase T (408 aa).

Histidine 78 provides a ligand contact to Zn(2+). Aspartate 80 is a catalytic residue. Aspartate 141 contacts Zn(2+). Glutamate 175 (proton acceptor) is an active-site residue. Zn(2+) contacts are provided by glutamate 176, aspartate 198, and histidine 380.

This sequence belongs to the peptidase M20B family. The cofactor is Zn(2+).

Its subcellular location is the cytoplasm. It catalyses the reaction Release of the N-terminal residue from a tripeptide.. Its function is as follows. Cleaves the N-terminal amino acid of tripeptides. This Clostridium botulinum (strain Langeland / NCTC 10281 / Type F) protein is Peptidase T.